Here is a 380-residue protein sequence, read N- to C-terminus: Beta sliding clamp (380 aa).

It belongs to the beta sliding clamp family. As to quaternary structure, forms a ring-shaped head-to-tail homodimer around DNA which binds and tethers DNA polymerases and other proteins to the DNA. The DNA replisome complex has a single clamp-loading complex (3 tau and 1 each of delta, delta', psi and chi subunits) which binds 3 Pol III cores (1 core on the leading strand and 2 on the lagging strand) each with a beta sliding clamp dimer. Additional proteins in the replisome are other copies of gamma, psi and chi, Ssb, DNA helicase and RNA primase.

Its subcellular location is the cytoplasm. In terms of biological role, confers DNA tethering and processivity to DNA polymerases and other proteins. Acts as a clamp, forming a ring around DNA (a reaction catalyzed by the clamp-loading complex) which diffuses in an ATP-independent manner freely and bidirectionally along dsDNA. Initially characterized for its ability to contact the catalytic subunit of DNA polymerase III (Pol III), a complex, multichain enzyme responsible for most of the replicative synthesis in bacteria; Pol III exhibits 3'-5' exonuclease proofreading activity. The beta chain is required for initiation of replication as well as for processivity of DNA replication. The chain is Beta sliding clamp (dnaN) from Mycoplasma genitalium (strain ATCC 33530 / DSM 19775 / NCTC 10195 / G37) (Mycoplasmoides genitalium).